A 536-amino-acid chain; its full sequence is Dual specificity calcium/calmodulin-dependent 3',5'-cyclic nucleotide phosphodiesterase 1B (536 aa).

Residues 1–20 (MELSPRSPPEMLEESDCPSP) form a disordered region. 2 positions are modified to phosphoserine: Ser-7 and Ser-15. Calmodulin-binding regions lie at residues 27–47 (PSKKMWIKLRSLLRYMVKQLE) and 118–141 (EKPKFRSIVHAVQAGIFVERMFRR). Residues 146–503 (VGPTYSTAVL…QKWKERAASG (358 aa)) enclose the PDEase domain. The Proton donor role is filled by His-223. Zn(2+) is bound by residues His-227, His-263, Asp-264, and Asp-370. Mg(2+) is bound at residue Asp-264. Disordered stretches follow at residues 447–474 (LADEDSKSKNQPSFQWRQPSLDVEVGDP) and 494–536 (QKWK…GNLD). Polar residues predominate over residues 455–464 (KNQPSFQWRQ). Phosphoserine is present on residues Ser-466 and Ser-514.

This sequence belongs to the cyclic nucleotide phosphodiesterase family. PDE1 subfamily. As to quaternary structure, homodimer. The cofactor is Zn(2+). Requires Mg(2+) as cofactor.

Its subcellular location is the cytoplasm. The protein localises to the cytosol. It catalyses the reaction a nucleoside 3',5'-cyclic phosphate + H2O = a nucleoside 5'-phosphate + H(+). The catalysed reaction is 3',5'-cyclic GMP + H2O = GMP + H(+). The enzyme catalyses 3',5'-cyclic AMP + H2O = AMP + H(+). Type I PDE are activated by the binding of calmodulin in the presence of Ca(2+). Cyclic nucleotide phosphodiesterase with a dual specificity for the second messengers cAMP and cGMP, which are key regulators of many important physiological processes. Has a preference for cGMP as a substrate. The sequence is that of Dual specificity calcium/calmodulin-dependent 3',5'-cyclic nucleotide phosphodiesterase 1B from Homo sapiens (Human).